Here is a 300-residue protein sequence, read N- to C-terminus: Meiosis-specific cyclin crs1 (300 aa).

A Cyclin N-terminal domain is found at 61–183; that stretch reads IIEQEKKGLT…VLALLNFDIY (123 aa).

The protein belongs to the cyclin family. Cyclin AB subfamily.

The protein localises to the cytoplasm. The protein resides in the nucleus. Its function is as follows. Has a role in meiotic chromosome segregation. In Schizosaccharomyces pombe (strain 972 / ATCC 24843) (Fission yeast), this protein is Meiosis-specific cyclin crs1 (crs1).